We begin with the raw amino-acid sequence, 137 residues long: Phosphoribosyl-AMP cyclohydrolase (137 aa).

Residue Asp-84 coordinates Mg(2+). Cys-85 lines the Zn(2+) pocket. Mg(2+)-binding residues include Asp-86 and Asp-88. The Zn(2+) site is built by Cys-101 and Cys-108.

The protein belongs to the PRA-CH family. In terms of assembly, homodimer. Mg(2+) is required as a cofactor. It depends on Zn(2+) as a cofactor.

The protein resides in the cytoplasm. The catalysed reaction is 1-(5-phospho-beta-D-ribosyl)-5'-AMP + H2O = 1-(5-phospho-beta-D-ribosyl)-5-[(5-phospho-beta-D-ribosylamino)methylideneamino]imidazole-4-carboxamide. It participates in amino-acid biosynthesis; L-histidine biosynthesis; L-histidine from 5-phospho-alpha-D-ribose 1-diphosphate: step 3/9. Its function is as follows. Catalyzes the hydrolysis of the adenine ring of phosphoribosyl-AMP. This chain is Phosphoribosyl-AMP cyclohydrolase, found in Chlorobium phaeobacteroides (strain DSM 266 / SMG 266 / 2430).